Consider the following 438-residue polypeptide: uncharacterized protein (438 aa).

K273 is subject to N6-(pyridoxal phosphate)lysine.

Belongs to the class-III pyridoxal-phosphate-dependent aminotransferase family. Pyridoxal 5'-phosphate is required as a cofactor.

It is found in the mitochondrion. This is an uncharacterized protein from Schizosaccharomyces pombe (strain 972 / ATCC 24843) (Fission yeast).